The following is a 445-amino-acid chain: C-type lectin domain family 4 member M (445 aa).

Topologically, residues 1 to 49 (MSDSKEPRVQQLGLLEEDPTTSGIRLFPRDFQFQQIHGHKSSTGCLGHG) are cytoplasmic. The Endocytosis signal motif lies at 14-15 (LL). The helical; Signal-anchor for type II membrane protein transmembrane segment at 50–70 (PLVLQLLSFTLLAGVLVAILV) threads the bilayer. The Extracellular portion of the chain corresponds to 71-445 (QVSKVPSSLS…KKPAVCFRDE (375 aa)). An N-linked (GlcNAc...) asparagine glycan is attached at asparagine 92. A run of 9 repeats spans residues 108-130 (KLQEIYQELTQLKAAVGELPEKS), 131-151 (KLQEIYQELTQLKAAVGELPE), 154-176 (KLQEIYQELTQLKAAVGELPEKS), 177-199 (KLQEIYQELTQLKAAVGELPEKS), 200-222 (KLQEIYQELTQLKAAVGELPEKS), 223-245 (KLQETYQELTQLKAAVGELPEKS), 246-268 (KLQEIYQELTQLKAAVGELPEKS), 269-291 (ELQEIYQELTQLKAALGKLPDQS), and 292-314 (KQQQIYQELTDLKTAFERLCRHC). Positions 108 to 315 (KLQEIYQELT…AFERLCRHCP (208 aa)) are 9 X approximate tandem repeats. 4 disulfide bridges follow: cysteine 311–cysteine 441, cysteine 314–cysteine 325, cysteine 342–cysteine 435, and cysteine 414–cysteine 427. The C-type lectin domain occupies 320 to 436 (FFQGNCYFMS…CDIDNYWICK (117 aa)). Glutamate 405, asparagine 407, serine 409, glutamate 412, asparagine 423, and aspartate 424 together coordinate Ca(2+). N-linked (GlcNAc...) asparagine glycosylation occurs at asparagine 407.

In terms of assembly, homotetramer.

It is found in the membrane. In terms of biological role, probable pathogen-recognition receptor involved in peripheral immune surveillance in liver. May mediate the endocytosis of pathogens which are subsequently degraded in lysosomal compartments. Probably recognizes in a calcium-dependent manner high mannose N-linked oligosaccharides in a variety of pathogen antigens. Is a receptor for ICAM3, probably by binding to mannose-like carbohydrates. The protein is C-type lectin domain family 4 member M (CLEC4M) of Pan troglodytes (Chimpanzee).